The following is a 417-amino-acid chain: UDP-N-acetylglucosamine 1-carboxyvinyltransferase (417 aa).

22–23 provides a ligand contact to phosphoenolpyruvate; sequence KN. Position 93 (Arg93) interacts with UDP-N-acetyl-alpha-D-glucosamine. The Proton donor role is filled by Cys117. Cys117 bears the 2-(S-cysteinyl)pyruvic acid O-phosphothioketal mark. The UDP-N-acetyl-alpha-D-glucosamine site is built by Asp304 and Ile326.

Belongs to the EPSP synthase family. MurA subfamily.

The protein localises to the cytoplasm. The catalysed reaction is phosphoenolpyruvate + UDP-N-acetyl-alpha-D-glucosamine = UDP-N-acetyl-3-O-(1-carboxyvinyl)-alpha-D-glucosamine + phosphate. The protein operates within cell wall biogenesis; peptidoglycan biosynthesis. In terms of biological role, cell wall formation. Adds enolpyruvyl to UDP-N-acetylglucosamine. The protein is UDP-N-acetylglucosamine 1-carboxyvinyltransferase of Neisseria gonorrhoeae (strain ATCC 700825 / FA 1090).